A 978-amino-acid polypeptide reads, in one-letter code: Calsyntenin-1 (978 aa).

The signal sequence occupies residues 1 to 26 (MTFHKTFGYGCIVLICFELLFAGVET). Residues 27–876 (SSENDDEYLT…SFIHKAEGSH (850 aa)) lie on the Extracellular side of the membrane. Cadherin domains lie at 37–143 (QKEI…APTF) and 144–249 (LEPS…MPER). N-linked (GlcNAc...) asparagine glycosylation is present at asparagine 53. 4 N-linked (GlcNAc...) asparagine glycosylation sites follow: asparagine 304, asparagine 486, asparagine 608, and asparagine 823. Residues 877–897 (VTMLIILVSVFLAVLLCGVSI) form a helical membrane-spanning segment. At 898 to 978 (ARLKNNQKYI…EWDNSNIFQQ (81 aa)) the chain is on the cytoplasmic side. A disordered region spans residues 937–958 (ADVTSDASSESENSESEDEEAL). Residues 948-957 (ENSESEDEEA) are compositionally biased toward acidic residues.

The protein belongs to the calsyntenin family.

It localises to the postsynaptic cell membrane. Its function is as follows. Postsynaptic adhesion molecule that binds to presynaptic neurexins to mediate both excitatory and inhibitory synapse formation. Promotes synapse development by acting as a cell adhesion molecule at the postsynaptic membrane, which associates with neurexin-alpha at the presynaptic membrane. This is Calsyntenin-1 (Cals) from Drosophila melanogaster (Fruit fly).